The sequence spans 201 residues: MSDREGLFGGDDPFEIARKWLAEATETEINDPNAIALATVDASGMPNSRMVLLKEIEDAAFVFYTNYESAKAQEIEASGTASFVMHWKSLRRQIRVRGHVTKENGPQADEYFASRSLKSRLGAWASKQSQPLASRSALMAEVAKITAQKGPNPKRPEFWGGYRITPIEIEFWADGAFRLHDRFVWRKNTSHDNWTITRLSP.

FMN is bound by residues 49–54, 64–65, Lys-71, and Gln-93; these read RMVLLK and YT. Lys-54 contributes to the substrate binding site. Tyr-111, Arg-115, and Ser-119 together coordinate substrate. FMN-binding positions include 128–129 and Trp-172; that span reads QS. 178 to 180 lines the substrate pocket; sequence RLH. Arg-182 is a binding site for FMN.

It belongs to the pyridoxamine 5'-phosphate oxidase family. In terms of assembly, homodimer. FMN serves as cofactor.

The enzyme catalyses pyridoxamine 5'-phosphate + O2 + H2O = pyridoxal 5'-phosphate + H2O2 + NH4(+). The catalysed reaction is pyridoxine 5'-phosphate + O2 = pyridoxal 5'-phosphate + H2O2. The protein operates within cofactor metabolism; pyridoxal 5'-phosphate salvage; pyridoxal 5'-phosphate from pyridoxamine 5'-phosphate: step 1/1. It participates in cofactor metabolism; pyridoxal 5'-phosphate salvage; pyridoxal 5'-phosphate from pyridoxine 5'-phosphate: step 1/1. Its function is as follows. Catalyzes the oxidation of either pyridoxine 5'-phosphate (PNP) or pyridoxamine 5'-phosphate (PMP) into pyridoxal 5'-phosphate (PLP). This is Pyridoxine/pyridoxamine 5'-phosphate oxidase from Ruegeria sp. (strain TM1040) (Silicibacter sp.).